A 314-amino-acid polypeptide reads, in one-letter code: Methionyl-tRNA formyltransferase (314 aa).

Ser-111–Pro-114 contacts (6S)-5,6,7,8-tetrahydrofolate.

The protein belongs to the Fmt family.

It catalyses the reaction L-methionyl-tRNA(fMet) + (6R)-10-formyltetrahydrofolate = N-formyl-L-methionyl-tRNA(fMet) + (6S)-5,6,7,8-tetrahydrofolate + H(+). In terms of biological role, attaches a formyl group to the free amino group of methionyl-tRNA(fMet). The formyl group appears to play a dual role in the initiator identity of N-formylmethionyl-tRNA by promoting its recognition by IF2 and preventing the misappropriation of this tRNA by the elongation apparatus. This chain is Methionyl-tRNA formyltransferase, found in Coxiella burnetii (strain CbuK_Q154) (Coxiella burnetii (strain Q154)).